A 439-amino-acid chain; its full sequence is Histidine--tRNA ligase (439 aa).

This sequence belongs to the class-II aminoacyl-tRNA synthetase family. In terms of assembly, homodimer.

Its subcellular location is the cytoplasm. It catalyses the reaction tRNA(His) + L-histidine + ATP = L-histidyl-tRNA(His) + AMP + diphosphate + H(+). The protein is Histidine--tRNA ligase of Leptospira borgpetersenii serovar Hardjo-bovis (strain L550).